The chain runs to 464 residues: Propanal dehydrogenase (CoA-propanoylating) (464 aa).

Residues Met1–Leu18 form a targets protein to the BMC region.

This sequence belongs to the EutE/PduP family. As to quaternary structure, interacts with BMC shell proteins PduA and PduJ, which target this protein to BMC. Interacts with PduQ, probably via the N-terminus of PduQ. Interacts with PduK, probably with its BMC-containing N-terminus.

It localises to the bacterial microcompartment. It catalyses the reaction propanal + NAD(+) + CoA = propanoyl-CoA + NADH + H(+). Its pathway is polyol metabolism; 1,2-propanediol degradation. Functionally, a CoA-acylating aldehyde dehydrogenase required for optimal 1,2-propanediol (1,2-PD) degradation. Optimizes growth in the bacterial microcompartment (BMC) dedicated to 1,2-PD degradation by minimizing propionaldehyde toxicity. Directly targeted to the BMC. NAD(+) and NADH are regenerated internally within the Pdu BMC by the PduP and PduQ enzymes, which reduce NAD(+) and oxidize NADH respectively, although there must also be cofactor transport across the BMC. Its function is as follows. The 1,2-PD-specific bacterial microcompartment (BMC) concentrates low levels of 1,2-PD catabolic enzymes, concentrates volatile reaction intermediates thus enhancing pathway flux and keeps the level of toxic, mutagenic propionaldehyde low. The sequence is that of Propanal dehydrogenase (CoA-propanoylating) from Salmonella typhimurium (strain LT2 / SGSC1412 / ATCC 700720).